The chain runs to 586 residues: Adenine deaminase (586 aa).

The protein belongs to the metallo-dependent hydrolases superfamily. Adenine deaminase family. Mn(2+) is required as a cofactor.

It catalyses the reaction adenine + H2O + H(+) = hypoxanthine + NH4(+). The polypeptide is Adenine deaminase (Bdellovibrio bacteriovorus (strain ATCC 15356 / DSM 50701 / NCIMB 9529 / HD100)).